The chain runs to 107 residues: Putative ankyrin repeat protein L14 (107 aa).

3 ANK repeats span residues 19-48 (DNNY…NIRA), 49-78 (DNDC…NIRA), and 80-107 (NDCA…AVLS).

The polypeptide is Putative ankyrin repeat protein L14 (Acanthamoeba polyphaga (Amoeba)).